The primary structure comprises 87 residues: Small ribosomal subunit protein bS20 (87 aa).

The segment covering 1-11 (MAHHKSAIKRI) has biased composition (basic residues). The segment at 1–26 (MAHHKSAIKRIKQNEKRNARNRHQKS) is disordered.

This sequence belongs to the bacterial ribosomal protein bS20 family.

In terms of biological role, binds directly to 16S ribosomal RNA. The polypeptide is Small ribosomal subunit protein bS20 (Trichlorobacter lovleyi (strain ATCC BAA-1151 / DSM 17278 / SZ) (Geobacter lovleyi)).